The sequence spans 92 residues: Small ribosomal subunit protein uS19 (92 aa).

This sequence belongs to the universal ribosomal protein uS19 family.

In terms of biological role, protein S19 forms a complex with S13 that binds strongly to the 16S ribosomal RNA. This chain is Small ribosomal subunit protein uS19, found in Chelativorans sp. (strain BNC1).